The chain runs to 74 residues: DNA-directed RNA polymerase subunit omega (74 aa).

It belongs to the RNA polymerase subunit omega family. As to quaternary structure, the RNAP catalytic core consists of 2 alpha, 1 beta, 1 beta' and 1 omega subunit. When a sigma factor is associated with the core the holoenzyme is formed, which can initiate transcription.

It catalyses the reaction RNA(n) + a ribonucleoside 5'-triphosphate = RNA(n+1) + diphosphate. Its function is as follows. Promotes RNA polymerase assembly. Latches the N- and C-terminal regions of the beta' subunit thereby facilitating its interaction with the beta and alpha subunits. The chain is DNA-directed RNA polymerase subunit omega from Helicobacter acinonychis (strain Sheeba).